The sequence spans 468 residues: 6-phospho-beta-galactosidase (468 aa).

Residues Q19, H116, N159, E160, and N297 each coordinate D-galactose 6-phosphate. E160 functions as the Proton donor in the catalytic mechanism. The active-site Nucleophile is the E375. D-galactose 6-phosphate is bound by residues S428, W429, K435, and Y437.

The protein belongs to the glycosyl hydrolase 1 family.

The enzyme catalyses a 6-phospho-beta-D-galactoside + H2O = D-galactose 6-phosphate + an alcohol. It functions in the pathway carbohydrate metabolism; lactose degradation; D-galactose 6-phosphate and beta-D-glucose from lactose 6-phosphate: step 1/1. The protein is 6-phospho-beta-galactosidase of Streptococcus pneumoniae (strain JJA).